The following is a 247-amino-acid chain: Adiponectin (247 aa).

Positions 1–17 (MLLLQALLFLLILPSHA) are cleaved as a signal peptide. O-linked (GalNAc...) threonine glycosylation is found at threonine 23 and threonine 24. The residue at position 36 (lysine 36) is a 5-hydroxylysine. Cysteine 39 is modified (S-(2-succinyl)cysteine). Residues 44–105 (AGIPGHPGHN…GFPGTPGRKG (62 aa)) are disordered. The Collagen-like domain maps to 45–110 (GIPGHPGHNG…PGRKGEPGEA (66 aa)). 4-hydroxyproline occurs at positions 47, 50, and 56. Residues 58-73 (RDGRDGTPGEKGEKGD) are compositionally biased toward basic and acidic residues. Lysine 68, lysine 71, and lysine 80 each carry 5-hydroxylysine; alternate. O-linked (Gal...) hydroxylysine; alternate glycosylation is found at lysine 68, lysine 71, and lysine 80. At proline 94 the chain carries 4-hydroxyproline. At lysine 104 the chain carries 5-hydroxylysine; alternate. Lysine 104 carries O-linked (Gal...) hydroxylysine; alternate glycosylation. The C1q domain maps to 111 to 247 (AYVYRSAFSV…TGFLLYHDTN (137 aa)).

As to quaternary structure, homomultimer. Forms trimers, hexamers and 12- to 18-mers. The trimers (low molecular weight complexes / LMW) are assembled via non-covalent interactions of the collagen-like domains in a triple helix and hydrophobic interactions within the globular C1q domain. Several trimers can associate to form disulfide-linked hexamers (middle molecular weight complexes / MMW) and larger complexes (higher molecular weight / HMW). The HMW-complex assembly is also modulated by the degree of lysine hydroxylation and glycosylation. LMW, MMW and HMW complexes bind to HBEGF, MMW and HMW complexes bind to PDGFB, and HMW complex binds to FGF2. Interacts with CTRP9 via the C1q domain (heterotrimeric complex). Post-translationally, HMW complexes are more extensively glycosylated than smaller oligomers. Hydroxylation and glycosylation of the lysine residues within the collagen-like domain of adiponectin seem to be critically involved in regulating the formation and/or secretion of HMW complexes and consequently contribute to the insulin-sensitizing activity of adiponectin in hepatocytes. In terms of processing, O-glycosylated. Not N-glycosylated O-linked glycans on hydroxylysine residues consist of Glc-Gal disaccharides bound to the oxygen atom of post-translationally added hydroxyl groups. O-linked glycosylation in the N-terminal is disialylated with the structure Neu5Acalpha2-&gt;8Neu5Acalpha2-&gt;3Gal. Sialylated by alpha 2,8-sialyltransferase III. Succination of Cys-39 by the Krebs cycle intermediate fumarate, which leads to S-(2-succinyl)cysteine residues, inhibits polymerization and secretion of adiponectin. Adiponectin is a major target for succination in both adipocytes and adipose tissue of diabetic mice. It was proposed that succination of proteins is a biomarker of mitochondrial stress and accumulation of Krebs cycle intermediates in adipose tissue in diabetes and that succination of adiponectin may contribute to the decrease in plasma adiponectin in diabetes. In terms of tissue distribution, synthesized exclusively by adipocytes and secreted into plasma.

It localises to the secreted. Its activity is regulated as follows. Polymerization and secretion of adiponectin is inhibited by succination of cysteine residues by the Krebs cycle intermediate fumarate, which leads to S-(2-succinyl)cysteine residues. Its function is as follows. Important adipokine involved in the control of fat metabolism and insulin sensitivity, with direct anti-diabetic, anti-atherogenic and anti-inflammatory activities. Stimulates AMPK phosphorylation and activation in the liver and the skeletal muscle, enhancing glucose utilization and fatty-acid combustion. Antagonizes TNF-alpha by negatively regulating its expression in various tissues such as liver and macrophages, and also by counteracting its effects. Inhibits endothelial NF-kappa-B signaling through a cAMP-dependent pathway. May play a role in cell growth, angiogenesis and tissue remodeling by binding and sequestering various growth factors with distinct binding affinities, depending on the type of complex, LMW, MMW or HMW. The sequence is that of Adiponectin (Adipoq) from Mus musculus (Mouse).